The chain runs to 352 residues: MPATTAETLSLVNRSVSVAPLVLLSVVDHYNRTQANKSKSKRVVGVLLGQNDGKNVRVSNSFAVPFEEDDKDPSVWFLDHNYVESMNDMFKKVNAREKLIGWYHSGPKLRASDLDINELFKRYTPNPLLVIVDVQPKETGVPTDAYFAVDEIKDDGTTTSKTFVHTPSIIEAEEAEEIGVEHLLRDIRDVAVGTLSTRITNQMRSLQGLHHRLRDIQAYLQKVLDGQLPVNHAILGNLQDVFNLLPNLSTPKSGPGATGTNADSELNHAMSIKTNDQLMAIYLSSLIRAITAFHDLIENKIQNRQQQEENDAKKKEGENGEKKEGADKKEGSPAAANGESKEKENSPKEKKK.

One can recognise an MPN domain in the interval 16 to 152; sequence VSVAPLVLLS…TDAYFAVDEI (137 aa). A disordered region spans residues 303–352; that stretch reads NRQQQEENDAKKKEGENGEKKEGADKKEGSPAAANGESKEKENSPKEKKK. Composition is skewed to basic and acidic residues over residues 306–331 and 339–352; these read QQEENDAKKKEGENGEKKEGADKKEG and ESKEKENSPKEKKK.

The protein belongs to the peptidase M67A family.

Functionally, acts as a regulatory subunit of the 26S proteasome which is involved in the ATP-dependent degradation of ubiquitinated proteins. The chain is 26S proteasome regulatory subunit rpn-8 (rpn-8) from Neurospora crassa (strain ATCC 24698 / 74-OR23-1A / CBS 708.71 / DSM 1257 / FGSC 987).